The following is a 404-amino-acid chain: Serine/threonine transporter SstT (404 aa).

The next 9 membrane-spanning stretches (helical) occupy residues 17–37 (IGIGVVIGLLLGILLPDVTAI), 44–64 (FVGALKAIAPLLVFALVVQAI), 75–95 (ITLIIVLYLLGTFLAALVAVI), 138–158 (ALATANYIGVLAWALIFGLAL), 179–199 (IVVWIINVAPIGIMGLVFSTV), 212–232 (LLILVLVGTMLFVALVVNPLL), 287–307 (IPLGAMINMGGAAITINVLTL), 319–339 (FLTALLLSVVAAISACGASGV), and 354–374 (FGISSDLAMQVVGVGFIVGVI).

It belongs to the dicarboxylate/amino acid:cation symporter (DAACS) (TC 2.A.23) family.

Its subcellular location is the cell membrane. The enzyme catalyses L-serine(in) + Na(+)(in) = L-serine(out) + Na(+)(out). It catalyses the reaction L-threonine(in) + Na(+)(in) = L-threonine(out) + Na(+)(out). Functionally, involved in the import of serine and threonine into the cell, with the concomitant import of sodium (symport system). The polypeptide is Serine/threonine transporter SstT (Streptococcus equi subsp. zooepidemicus (strain MGCS10565)).